Here is a 756-residue protein sequence, read N- to C-terminus: 5-methyltetrahydropteroyltriglutamate--homocysteine methyltransferase (756 aa).

5-methyltetrahydropteroyltri-L-glutamate contacts are provided by residues 16 to 19 (RELK) and Lys-112. L-homocysteine is bound by residues 432–434 (IGS) and Glu-485. L-methionine-binding positions include 432–434 (IGS) and Glu-485. 5-methyltetrahydropteroyltri-L-glutamate is bound by residues 516-517 (RC) and Trp-562. Asp-600 lines the L-homocysteine pocket. Position 600 (Asp-600) interacts with L-methionine. Glu-606 is a binding site for 5-methyltetrahydropteroyltri-L-glutamate. The Zn(2+) site is built by His-642, Cys-644, and Glu-666. His-695 serves as the catalytic Proton donor. Cys-727 lines the Zn(2+) pocket.

It belongs to the vitamin-B12 independent methionine synthase family. Zn(2+) serves as cofactor.

The catalysed reaction is 5-methyltetrahydropteroyltri-L-glutamate + L-homocysteine = tetrahydropteroyltri-L-glutamate + L-methionine. The protein operates within amino-acid biosynthesis; L-methionine biosynthesis via de novo pathway; L-methionine from L-homocysteine (MetE route): step 1/1. In terms of biological role, catalyzes the transfer of a methyl group from 5-methyltetrahydrofolate to homocysteine resulting in methionine formation. This Haemophilus influenzae (strain PittGG) protein is 5-methyltetrahydropteroyltriglutamate--homocysteine methyltransferase.